A 224-amino-acid polypeptide reads, in one-letter code: Ribonuclease T (224 aa).

In terms of domain architecture, Exonuclease spans 32–206 (VVVDVETGGF…YDTEKTAELF (175 aa)). 4 residues coordinate Mg(2+): Asp-35, Glu-37, His-193, and Asp-198. The Proton donor/acceptor role is filled by His-193.

The protein belongs to the RNase T family. As to quaternary structure, homodimer. Mg(2+) is required as a cofactor.

Its function is as follows. Trims short 3' overhangs of a variety of RNA species, leaving a one or two nucleotide 3' overhang. Responsible for the end-turnover of tRNA: specifically removes the terminal AMP residue from uncharged tRNA (tRNA-C-C-A). Also appears to be involved in tRNA biosynthesis. The protein is Ribonuclease T of Pseudomonas fluorescens (strain Pf0-1).